Here is a 148-residue protein sequence, read N- to C-terminus: Nodulation protein NolJ (148 aa).

Acidic residues predominate over residues 66–78 (ADEAMEETEEDAD). 2 disordered regions span residues 66–93 (ADEA…VSDG) and 124–148 (AAKG…RGYG). A compositionally biased stretch (low complexity) spans 124-136 (AAKGAGAAVPGPN).

Involved in efficiency of soybean nodulation and in nodulation delay. The sequence is that of Nodulation protein NolJ (nolJ) from Rhizobium fredii (Sinorhizobium fredii).